The following is a 613-amino-acid chain: Na(+)/H(+) antiporter NhaA 1 (613 aa).

The interval 1-24 (MTEASARTIGPLPSRFSRDPKTPR) is disordered. Positions 1–408 (MTEASARTIG…DPARQDEARV (408 aa)) are na(+)/H(+) antiporter NhaA. The next 11 membrane-spanning stretches (helical) occupy residues 29–49 (AAAA…NSPW), 81–101 (GLMA…FVIG), 110–130 (AVPV…FLTF), 138–158 (QAWG…LAVI), 168–188 (IFLL…IALF), 191–211 (DDLK…LAMV), 231–251 (IALY…AVLI), 300–320 (AVGP…NAGV), 337–357 (WGIV…ATAL), 377–397 (GGAA…DVAI), and 408–428 (VGVL…FRIT). A Thioredoxin domain is found at 409-613 (GVLIASVLAF…SLIRALEAGR (205 aa)).

The protein in the N-terminal section; belongs to the NhaA Na(+)/H(+) (TC 2.A.33) antiporter family.

The protein localises to the cell membrane. The enzyme catalyses Na(+)(in) + 2 H(+)(out) = Na(+)(out) + 2 H(+)(in). Na(+)/H(+) antiporter that extrudes sodium in exchange for external protons. This is Na(+)/H(+) antiporter NhaA 1 from Mycobacterium sp. (strain JLS).